Reading from the N-terminus, the 103-residue chain is Small ribosomal subunit protein uS10 (103 aa).

This sequence belongs to the universal ribosomal protein uS10 family. In terms of assembly, part of the 30S ribosomal subunit.

Functionally, involved in the binding of tRNA to the ribosomes. The polypeptide is Small ribosomal subunit protein uS10 (Shewanella baltica (strain OS223)).